Here is a 57-residue protein sequence, read N- to C-terminus: UPF0391 membrane protein NE0130 (57 aa).

The next 2 membrane-spanning stretches (helical) occupy residues 1–21 (MLKW…FGFR) and 33–53 (FLFF…LLGI).

This sequence belongs to the UPF0391 family.

The protein resides in the cell membrane. This Nitrosomonas europaea (strain ATCC 19718 / CIP 103999 / KCTC 2705 / NBRC 14298) protein is UPF0391 membrane protein NE0130.